The sequence spans 172 residues: Large ribosomal subunit protein eL20 (172 aa).

This sequence belongs to the eukaryotic ribosomal protein eL20 family. In terms of assembly, component of the large ribosomal subunit. Mature ribosomes consist of a small (40S) and a large (60S) subunit. The 40S subunit contains about 32 different proteins and 1 molecule of RNA (18S). The 60S subunit contains 45 different proteins and 3 molecules of RNA (25S, 5.8S and 5S).

The protein localises to the cytoplasm. In terms of biological role, component of the ribosome, a large ribonucleoprotein complex responsible for the synthesis of proteins in the cell. The small ribosomal subunit (SSU) binds messenger RNAs (mRNAs) and translates the encoded message by selecting cognate aminoacyl-transfer RNA (tRNA) molecules. The large subunit (LSU) contains the ribosomal catalytic site termed the peptidyl transferase center (PTC), which catalyzes the formation of peptide bonds, thereby polymerizing the amino acids delivered by tRNAs into a polypeptide chain. The nascent polypeptides leave the ribosome through a tunnel in the LSU and interact with protein factors that function in enzymatic processing, targeting, and the membrane insertion of nascent chains at the exit of the ribosomal tunnel. This Candida albicans (strain SC5314 / ATCC MYA-2876) (Yeast) protein is Large ribosomal subunit protein eL20.